A 597-amino-acid chain; its full sequence is Elongation factor 4 (597 aa).

The tr-type G domain maps to 2 to 184; sequence QHIRNFSIIA…TIVARVPAPQ (183 aa). Residues 14 to 19 and 131 to 134 contribute to the GTP site; these read DHGKST and NKMD.

The protein belongs to the TRAFAC class translation factor GTPase superfamily. Classic translation factor GTPase family. LepA subfamily.

It localises to the cell inner membrane. The enzyme catalyses GTP + H2O = GDP + phosphate + H(+). Required for accurate and efficient protein synthesis under certain stress conditions. May act as a fidelity factor of the translation reaction, by catalyzing a one-codon backward translocation of tRNAs on improperly translocated ribosomes. Back-translocation proceeds from a post-translocation (POST) complex to a pre-translocation (PRE) complex, thus giving elongation factor G a second chance to translocate the tRNAs correctly. Binds to ribosomes in a GTP-dependent manner. The sequence is that of Elongation factor 4 from Bordetella petrii (strain ATCC BAA-461 / DSM 12804 / CCUG 43448).